The sequence spans 647 residues: DNA mismatch repair protein MutL (647 aa).

Belongs to the DNA mismatch repair MutL/HexB family.

In terms of biological role, this protein is involved in the repair of mismatches in DNA. It is required for dam-dependent methyl-directed DNA mismatch repair. May act as a 'molecular matchmaker', a protein that promotes the formation of a stable complex between two or more DNA-binding proteins in an ATP-dependent manner without itself being part of a final effector complex. This is DNA mismatch repair protein MutL from Bacillus thuringiensis subsp. konkukian (strain 97-27).